Reading from the N-terminus, the 348-residue chain is Dihydroorotase (348 aa).

Zn(2+)-binding residues include His17 and His19. Substrate-binding positions include His19–Arg21 and Asn45. Zn(2+) is bound by residues Lys103, His140, and His178. Lys103 is modified (N6-carboxylysine). Residue His140 participates in substrate binding. Substrate is bound at residue Leu223. Residue Asp251 participates in Zn(2+) binding. The active site involves Asp251. His255 and Ala267 together coordinate substrate.

It belongs to the metallo-dependent hydrolases superfamily. DHOase family. Class II DHOase subfamily. In terms of assembly, homodimer. It depends on Zn(2+) as a cofactor.

It catalyses the reaction (S)-dihydroorotate + H2O = N-carbamoyl-L-aspartate + H(+). It functions in the pathway pyrimidine metabolism; UMP biosynthesis via de novo pathway; (S)-dihydroorotate from bicarbonate: step 3/3. Catalyzes the reversible cyclization of carbamoyl aspartate to dihydroorotate. This is Dihydroorotase from Salmonella heidelberg (strain SL476).